The primary structure comprises 261 residues: Protein FAM78B (261 aa).

The protein belongs to the FAM78 family.

This Homo sapiens (Human) protein is Protein FAM78B (FAM78B).